Here is a 218-residue protein sequence, read N- to C-terminus: Thiamine-phosphate synthase (218 aa).

Residues 43–47 and N75 contribute to the 4-amino-2-methyl-5-(diphosphooxymethyl)pyrimidine site; that span reads QLRDK. D76 and D95 together coordinate Mg(2+). S114 serves as a coordination point for 4-amino-2-methyl-5-(diphosphooxymethyl)pyrimidine. 141-143 is a binding site for 2-[(2R,5Z)-2-carboxy-4-methylthiazol-5(2H)-ylidene]ethyl phosphate; the sequence is TPT. K144 lines the 4-amino-2-methyl-5-(diphosphooxymethyl)pyrimidine pocket. A 2-[(2R,5Z)-2-carboxy-4-methylthiazol-5(2H)-ylidene]ethyl phosphate-binding site is contributed by G172.

Belongs to the thiamine-phosphate synthase family. Requires Mg(2+) as cofactor.

The enzyme catalyses 2-[(2R,5Z)-2-carboxy-4-methylthiazol-5(2H)-ylidene]ethyl phosphate + 4-amino-2-methyl-5-(diphosphooxymethyl)pyrimidine + 2 H(+) = thiamine phosphate + CO2 + diphosphate. The catalysed reaction is 2-(2-carboxy-4-methylthiazol-5-yl)ethyl phosphate + 4-amino-2-methyl-5-(diphosphooxymethyl)pyrimidine + 2 H(+) = thiamine phosphate + CO2 + diphosphate. It catalyses the reaction 4-methyl-5-(2-phosphooxyethyl)-thiazole + 4-amino-2-methyl-5-(diphosphooxymethyl)pyrimidine + H(+) = thiamine phosphate + diphosphate. It functions in the pathway cofactor biosynthesis; thiamine diphosphate biosynthesis; thiamine phosphate from 4-amino-2-methyl-5-diphosphomethylpyrimidine and 4-methyl-5-(2-phosphoethyl)-thiazole: step 1/1. In terms of biological role, condenses 4-methyl-5-(beta-hydroxyethyl)thiazole monophosphate (THZ-P) and 2-methyl-4-amino-5-hydroxymethyl pyrimidine pyrophosphate (HMP-PP) to form thiamine monophosphate (TMP). The chain is Thiamine-phosphate synthase from Thermobifida fusca (strain YX).